The chain runs to 672 residues: Tubulin--tyrosine ligase-like protein 12 (672 aa).

A TTL domain is found at 332 to 670 (KIKIFLQIFA…LDEIDPTKVT (339 aa)). ATP contacts are provided by residues 480–483 (CEYI), Lys-499, and Asp-501.

This sequence belongs to the tubulin--tyrosine ligase family.

In terms of biological role, regulates microtubule dynamics in uterine muscle cells. The chain is Tubulin--tyrosine ligase-like protein 12 from Caenorhabditis briggsae.